The following is a 325-amino-acid chain: MITKRQLSILNAIVEDYVDFGQPIGSKTLIHRHHLDVSPATIRNEMKQLEEMHFIEKTHTSSGRVPSESGIRYYVNRLLEQTSHQSQNKIQRLNQLLIENHYDSSTALTNFAHELSMKSQYATLVVRPNHKQDVINDIHLIRANNHLIILVMVFSSGHVENIHFVSHAQLNNINLNKIANFLTEHFSFNRKVLTQNIESYFSQKEELLLANEVVEMINLQIGNQSNSIYMGGKVKLIDALNESNVSSIQPILQYIESNKITELLEDISTSQINVRIGKEIDDSLSDISIVTSQYHFDESLKGQIAVIGPTAMHYQNVIQLLNRIW.

It belongs to the HrcA family.

Its function is as follows. Negative regulator of class I heat shock genes (grpE-dnaK-dnaJ and groELS operons). Prevents heat-shock induction of these operons. This is Heat-inducible transcription repressor HrcA from Staphylococcus epidermidis (strain ATCC 35984 / DSM 28319 / BCRC 17069 / CCUG 31568 / BM 3577 / RP62A).